The primary structure comprises 395 residues: MQRNNNFSKLETSYLFSSIRQKIRAFREAHPDVSIIDLSIGDTTQPLHTAVMDTFTKSVQKLGNPETYRGYGPELGLSTLREKLSEVFYQGKVSPEEIFISDGAKMDIFRLLSLFGPGKTIAVQDPSYPVYIDTALLAGAKKVIKLPCRKETDFFPVIPQGEEIDIFCLCSPNNPTGTVLTKEQLEELITYANSHGSIILFDAAYSAFISDPSLPKSIFEIPEARSCAIEINSFSKSLGFSGVRLGWNVVPKDLRYSNGLPIIDDWKRFLHTTFNGASLPVQEAAITGASLFPNLEAIAHYRHNSSLLREALQKAEFSVYGGEHAPYLWVEVPKILPDEDFFDFFLTQYHIAITPGKGFGACGKGYVRFSSLGKIEDIMAACQRLTLTSVYDRMV.

2 residues coordinate substrate: tyrosine 14 and glycine 41. Pyridoxal 5'-phosphate contacts are provided by residues tyrosine 71, alanine 104–lysine 105, tyrosine 128, asparagine 174, tyrosine 205, and serine 233–serine 235. The substrate site is built by lysine 105, tyrosine 128, and asparagine 174. Lysine 236 is modified (N6-(pyridoxal phosphate)lysine). Arginine 244 and asparagine 275 together coordinate pyridoxal 5'-phosphate. The substrate site is built by asparagine 275 and arginine 368.

The protein belongs to the class-I pyridoxal-phosphate-dependent aminotransferase family. LL-diaminopimelate aminotransferase subfamily. Homodimer. The cofactor is pyridoxal 5'-phosphate.

It catalyses the reaction (2S,6S)-2,6-diaminopimelate + 2-oxoglutarate = (S)-2,3,4,5-tetrahydrodipicolinate + L-glutamate + H2O + H(+). It functions in the pathway amino-acid biosynthesis; L-lysine biosynthesis via DAP pathway; LL-2,6-diaminopimelate from (S)-tetrahydrodipicolinate (aminotransferase route): step 1/1. In terms of biological role, involved in the synthesis of meso-diaminopimelate (m-DAP or DL-DAP), required for both lysine and peptidoglycan biosynthesis. Catalyzes the direct conversion of tetrahydrodipicolinate to LL-diaminopimelate. This chain is LL-diaminopimelate aminotransferase, found in Chlamydia caviae (strain ATCC VR-813 / DSM 19441 / 03DC25 / GPIC) (Chlamydophila caviae).